The primary structure comprises 208 residues: Uracil phosphoribosyltransferase (208 aa).

Residues R78, R103, and 130 to 138 (DPMLATGVS) each bind 5-phospho-alpha-D-ribose 1-diphosphate. Residues I193 and 198–200 (GDA) contribute to the uracil site. Residue D199 participates in 5-phospho-alpha-D-ribose 1-diphosphate binding.

The protein belongs to the UPRTase family. Mg(2+) is required as a cofactor.

The catalysed reaction is UMP + diphosphate = 5-phospho-alpha-D-ribose 1-diphosphate + uracil. It functions in the pathway pyrimidine metabolism; UMP biosynthesis via salvage pathway; UMP from uracil: step 1/1. Allosterically activated by GTP. Functionally, catalyzes the conversion of uracil and 5-phospho-alpha-D-ribose 1-diphosphate (PRPP) to UMP and diphosphate. The sequence is that of Uracil phosphoribosyltransferase from Thermosipho melanesiensis (strain DSM 12029 / CIP 104789 / BI429).